A 397-amino-acid polypeptide reads, in one-letter code: Tryptophan synthase beta chain (397 aa).

At K86 the chain carries N6-(pyridoxal phosphate)lysine.

Belongs to the TrpB family. In terms of assembly, tetramer of two alpha and two beta chains. Requires pyridoxal 5'-phosphate as cofactor.

The catalysed reaction is (1S,2R)-1-C-(indol-3-yl)glycerol 3-phosphate + L-serine = D-glyceraldehyde 3-phosphate + L-tryptophan + H2O. It functions in the pathway amino-acid biosynthesis; L-tryptophan biosynthesis; L-tryptophan from chorismate: step 5/5. Its function is as follows. The beta subunit is responsible for the synthesis of L-tryptophan from indole and L-serine. The polypeptide is Tryptophan synthase beta chain (Edwardsiella ictaluri (strain 93-146)).